We begin with the raw amino-acid sequence, 92 residues long: Small ribosomal subunit protein uS19c (92 aa).

It belongs to the universal ribosomal protein uS19 family.

It localises to the plastid. It is found in the chloroplast. Functionally, protein S19 forms a complex with S13 that binds strongly to the 16S ribosomal RNA. This is Small ribosomal subunit protein uS19c from Tupiella akineta (Green alga).